The sequence spans 152 residues: Large ribosomal subunit protein bL9 (152 aa).

The protein belongs to the bacterial ribosomal protein bL9 family.

Binds to the 23S rRNA. This is Large ribosomal subunit protein bL9 from Mycobacterium ulcerans (strain Agy99).